Consider the following 250-residue polypeptide: Putative ABC transporter ATP-binding protein YjkB (250 aa).

Positions 13–245 (ISFRSVRKSY…PQHEAAKEFL (233 aa)) constitute an ABC transporter domain. 49–56 (GPSGSGKS) contributes to the ATP binding site.

The protein belongs to the ABC transporter superfamily.

This is Putative ABC transporter ATP-binding protein YjkB (yjkB) from Bacillus subtilis (strain 168).